The sequence spans 201 residues: LexA repressor (201 aa).

The segment at residues Leu28 to Glu48 is a DNA-binding region (H-T-H motif). Residues Ser120 and Lys157 each act as for autocatalytic cleavage activity in the active site.

The protein belongs to the peptidase S24 family. Homodimer.

The enzyme catalyses Hydrolysis of Ala-|-Gly bond in repressor LexA.. Functionally, represses a number of genes involved in the response to DNA damage (SOS response), including recA and lexA. In the presence of single-stranded DNA, RecA interacts with LexA causing an autocatalytic cleavage which disrupts the DNA-binding part of LexA, leading to derepression of the SOS regulon and eventually DNA repair. The protein is LexA repressor of Citrifermentans bemidjiense (strain ATCC BAA-1014 / DSM 16622 / JCM 12645 / Bem) (Geobacter bemidjiensis).